Consider the following 312-residue polypeptide: Ribosomal RNA small subunit methyltransferase H (312 aa).

Residues glycine 35–histidine 37, aspartate 55, phenylalanine 85, aspartate 101, and glutamine 108 contribute to the S-adenosyl-L-methionine site.

It belongs to the methyltransferase superfamily. RsmH family.

It is found in the cytoplasm. The enzyme catalyses cytidine(1402) in 16S rRNA + S-adenosyl-L-methionine = N(4)-methylcytidine(1402) in 16S rRNA + S-adenosyl-L-homocysteine + H(+). Its function is as follows. Specifically methylates the N4 position of cytidine in position 1402 (C1402) of 16S rRNA. This Buchnera aphidicola subsp. Acyrthosiphon pisum (strain Tuc7) protein is Ribosomal RNA small subunit methyltransferase H.